We begin with the raw amino-acid sequence, 87 residues long: Potassium channel toxin Ttr-beta-KTx (87 aa).

The first 19 residues, 1-19 (MERKWALLLFLGMVTLVSC), serve as a signal peptide directing secretion. Positions 20-27 (GLREKHVQ) are excised as a propeptide. In terms of domain architecture, BetaSPN-type CS-alpha/beta spans 53-87 (QFGCPAYEGYCNNHCQDIKRKDGECHGFKCKCAKD). Intrachain disulfides connect Cys-56–Cys-77, Cys-63–Cys-82, and Cys-67–Cys-84.

It belongs to the long chain scorpion toxin family. Class 1 subfamily. Expressed by the venom gland.

The protein resides in the secreted. Functionally, inhibits voltage-gated potassium channel. This Tityus trivittatus (Argentinean scorpion) protein is Potassium channel toxin Ttr-beta-KTx.